Here is a 314-residue protein sequence, read N- to C-terminus: DNA-directed RNA polymerase subunit alpha (314 aa).

The interval 1–228 (MIEIEKPRIE…EHLNIFVGLT (228 aa)) is alpha N-terminal domain (alpha-NTD). Residues 245–314 (KEKVLEMSIE…DLGLGLRKED (70 aa)) are alpha C-terminal domain (alpha-CTD).

It belongs to the RNA polymerase alpha chain family. Homodimer. The RNAP catalytic core consists of 2 alpha, 1 beta, 1 beta' and 1 omega subunit. When a sigma factor is associated with the core the holoenzyme is formed, which can initiate transcription.

The catalysed reaction is RNA(n) + a ribonucleoside 5'-triphosphate = RNA(n+1) + diphosphate. Functionally, DNA-dependent RNA polymerase catalyzes the transcription of DNA into RNA using the four ribonucleoside triphosphates as substrates. This Staphylococcus haemolyticus (strain JCSC1435) protein is DNA-directed RNA polymerase subunit alpha.